The sequence spans 271 residues: Aminoglycoside 3'-phosphotransferase (271 aa).

D198 functions as the Proton acceptor in the catalytic mechanism.

Belongs to the aminoglycoside phosphotransferase family.

It catalyses the reaction kanamycin A + ATP = kanamycin 3'-phosphate + ADP + H(+). Its function is as follows. Resistance to kanamycin and structurally-related aminoglycosides, including amikacin. This is Aminoglycoside 3'-phosphotransferase (aphA) from Escherichia coli.